The following is a 105-amino-acid chain: Small ribosomal subunit protein uS10 (105 aa).

This sequence belongs to the universal ribosomal protein uS10 family. In terms of assembly, part of the 30S ribosomal subunit.

Its function is as follows. Involved in the binding of tRNA to the ribosomes. The sequence is that of Small ribosomal subunit protein uS10 from Synechococcus elongatus (strain ATCC 33912 / PCC 7942 / FACHB-805) (Anacystis nidulans R2).